Here is a 345-residue protein sequence, read N- to C-terminus: NADH-quinone oxidoreductase subunit H (345 aa).

Helical transmembrane passes span 13 to 33 (VIIL…LLFL), 84 to 104 (FILA…VIPF), 115 to 135 (VAIL…IMGG), 161 to 181 (IGLI…GDIV), 190 to 210 (LFNW…ISCL), 248 to 268 (YIAI…GWLS), 277 to 297 (PLWM…VKAI), and 309 to 329 (LGWK…AFAA).

Belongs to the complex I subunit 1 family. In terms of assembly, NDH-1 is composed of 14 different subunits. Subunits NuoA, H, J, K, L, M, N constitute the membrane sector of the complex.

It localises to the cell inner membrane. It carries out the reaction a quinone + NADH + 5 H(+)(in) = a quinol + NAD(+) + 4 H(+)(out). In terms of biological role, NDH-1 shuttles electrons from NADH, via FMN and iron-sulfur (Fe-S) centers, to quinones in the respiratory chain. The immediate electron acceptor for the enzyme in this species is believed to be ubiquinone. Couples the redox reaction to proton translocation (for every two electrons transferred, four hydrogen ions are translocated across the cytoplasmic membrane), and thus conserves the redox energy in a proton gradient. This subunit may bind ubiquinone. This Ruegeria sp. (strain TM1040) (Silicibacter sp.) protein is NADH-quinone oxidoreductase subunit H.